The primary structure comprises 353 residues: S-adenosylmethionine:tRNA ribosyltransferase-isomerase (353 aa).

Belongs to the QueA family. Monomer.

It is found in the cytoplasm. It catalyses the reaction 7-aminomethyl-7-carbaguanosine(34) in tRNA + S-adenosyl-L-methionine = epoxyqueuosine(34) in tRNA + adenine + L-methionine + 2 H(+). It participates in tRNA modification; tRNA-queuosine biosynthesis. In terms of biological role, transfers and isomerizes the ribose moiety from AdoMet to the 7-aminomethyl group of 7-deazaguanine (preQ1-tRNA) to give epoxyqueuosine (oQ-tRNA). The chain is S-adenosylmethionine:tRNA ribosyltransferase-isomerase from Maricaulis maris (strain MCS10) (Caulobacter maris).